Reading from the N-terminus, the 407-residue chain is GTPase Obg (407 aa).

The Obg domain occupies 1-159; the sequence is MKFVDEVSIR…RDLKMEMKVL (159 aa). Positions 127-150 are disordered; that stretch reads NTRFKSSTNRAPRQTTPGKPGDQR. Residues 129 to 143 show a composition bias toward polar residues; that stretch reads RFKSSTNRAPRQTTP. Positions 160-333 constitute an OBG-type G domain; that stretch reads ADVGLLGLPN…LSHDLMRYLE (174 aa). GTP-binding positions include 166–173, 191–195, 213–216, 283–286, and 314–316; these read GLPNAGKS, FTTLV, DIPG, NKAD, and SAI. 2 residues coordinate Mg(2+): Ser173 and Thr193. Residues 378-407 are disordered; that stretch reads VKSVHDIGDDDDWDDFEDDEDGPEIIYVRD. Acidic residues predominate over residues 385-400; that stretch reads GDDDDWDDFEDDEDGP.

This sequence belongs to the TRAFAC class OBG-HflX-like GTPase superfamily. OBG GTPase family. As to quaternary structure, monomer. Mg(2+) is required as a cofactor.

It localises to the cytoplasm. Its function is as follows. An essential GTPase which binds GTP, GDP and possibly (p)ppGpp with moderate affinity, with high nucleotide exchange rates and a fairly low GTP hydrolysis rate. Plays a role in control of the cell cycle, stress response, ribosome biogenesis and in those bacteria that undergo differentiation, in morphogenesis control. The protein is GTPase Obg of Pseudomonas entomophila (strain L48).